Consider the following 625-residue polypeptide: Coagulation factor XI (625 aa).

Positions 1-18 (MIFLYQVVHFILFTSVSG) are cleaved as a signal peptide. 4 Apple domains span residues 20 to 103 (CVTQ…FKQC), 110 to 193 (CNKD…LKSC), 200 to 283 (CIRD…LQSC), and 291 to 374 (CHSS…LRLC). Disulfide bonds link C20/C103, C46/C76, C50/C56, C110/C193, C136/C165, C140/C146, C200/C283, C226/C255, C230/C236, C291/C374, C317/C346, C321/C327, C380/C500, C416/C432, C514/C581, C545/C560, and C571/C599. Residues N90 and N126 are each glycosylated (N-linked (GlcNAc...) (complex) asparagine). N163 is a glycosylation site (N-linked (GlcNAc...) (complex) asparagine; atypical). The 236-residue stretch at 388–623 (IVGGTASVRG…YVDWILEKTQ (236 aa)) folds into the Peptidase S1 domain. Residue H431 is the Charge relay system of the active site. N450 is a glycosylation site (N-linked (GlcNAc...) (complex) asparagine). The active-site Charge relay system is D480. N-linked (GlcNAc...) (complex) asparagine glycosylation occurs at N491. Heparin is bound at residue 547-550 (KRYR). Residue S575 is the Charge relay system of the active site.

It belongs to the peptidase S1 family. Plasma kallikrein subfamily. Homodimer; disulfide-linked. Can form non-covalently bonded homodimers. After activation the heavy and light chains are also linked by a disulfide bond. Interacts (activated) with F9 (inactive and activated) in calcium-dependent manner. Forms a heterodimer with SERPINA5. Interacts with Anopheles gambiae D7L2. Interacts (activated) with guianensin, an anticoagulant protein from Simulium guianense saliva. Post-translationally, N-glycosylated on both chains. N-glycosylated sites mainly consist of nonfucosylated sialylated biantennary (in high abundance) and/or triantennary (in low abundance) complex structures. Glycosylation at Asn-163 uses a rare non-canonical Asn-X-Cys glycosite. Activated by factor XIIa (or XII), which cleaves each polypeptide after Arg-387 into the light chain, which contains the active site, and the heavy chain, which associates with high molecular weight (HMW) kininogen. Activated by F12 (activated); the presence of negatively charged surfaces accelerates activation. Activated by F2 (thrombin); the presence of negatively charged surfaces, such as polyphosphate and dextran sulfate, strongly accelerates activation. Autoactivated; the presence of negatively charged surfaces, such as polyphosphate and dextran sulfate, accelerates autoactivation and autolysis. As to expression, isoform 2 is produced by platelets and megakaryocytes but absent from other blood cells.

The protein resides in the secreted. It catalyses the reaction Selective cleavage of Arg-|-Ala and Arg-|-Val bonds in factor IX to form factor IXa.. Inhibited by SERPINA5. Factor XI triggers the middle phase of the intrinsic pathway of blood coagulation by activating factor IX. The chain is Coagulation factor XI (F11) from Homo sapiens (Human).